The chain runs to 130 residues: Glycine cleavage system H protein (130 aa).

Positions 24-106 (IYSVGITEHA…YTDGWLFRIK (83 aa)) constitute a Lipoyl-binding domain. K65 carries the post-translational modification N6-lipoyllysine.

It belongs to the GcvH family. In terms of assembly, the glycine cleavage system is composed of four proteins: P, T, L and H. (R)-lipoate serves as cofactor.

Functionally, the glycine cleavage system catalyzes the degradation of glycine. The H protein shuttles the methylamine group of glycine from the P protein to the T protein. This chain is Glycine cleavage system H protein, found in Pectobacterium atrosepticum (strain SCRI 1043 / ATCC BAA-672) (Erwinia carotovora subsp. atroseptica).